The primary structure comprises 77 residues: MAVFEDVRDVVVEQLSVDPQAVKLESKIIEDLGADSLDVVELVMALEEKFEVEIPDSEAEKLVSIQDVVNYIEKLGK.

The 76-residue stretch at 1–76 folds into the Carrier domain; it reads MAVFEDVRDV…DVVNYIEKLG (76 aa). Ser-36 is modified (O-(pantetheine 4'-phosphoryl)serine).

It belongs to the acyl carrier protein (ACP) family. Post-translationally, 4'-phosphopantetheine is transferred from CoA to a specific serine of apo-ACP by AcpS. This modification is essential for activity because fatty acids are bound in thioester linkage to the sulfhydryl of the prosthetic group.

Its subcellular location is the cytoplasm. It functions in the pathway lipid metabolism; fatty acid biosynthesis. Carrier of the growing fatty acid chain in fatty acid biosynthesis. The sequence is that of Acyl carrier protein from Campylobacter concisus (strain 13826).